The chain runs to 451 residues: ATP-dependent protease ATPase subunit HslU (451 aa).

ATP-binding positions include isoleucine 26, 68–73 (GVGKTE), aspartate 263, glutamate 328, and arginine 400.

It belongs to the ClpX chaperone family. HslU subfamily. In terms of assembly, a double ring-shaped homohexamer of HslV is capped on each side by a ring-shaped HslU homohexamer. The assembly of the HslU/HslV complex is dependent on binding of ATP.

It localises to the cytoplasm. Functionally, ATPase subunit of a proteasome-like degradation complex; this subunit has chaperone activity. The binding of ATP and its subsequent hydrolysis by HslU are essential for unfolding of protein substrates subsequently hydrolyzed by HslV. HslU recognizes the N-terminal part of its protein substrates and unfolds these before they are guided to HslV for hydrolysis. In Dichelobacter nodosus (strain VCS1703A), this protein is ATP-dependent protease ATPase subunit HslU.